Consider the following 1024-residue polypeptide: MPSHTFNPQAGYDLAVDRNLGLGEIFYNRAQKSHQAIAVCDGGAVLTYGQLHAKAYRLAQELSQWLRLTEKPVGIVVQHGMADVVAQMAVIYAGGSCAPMDPTLPDNQIQGRLKRLDAVCVLTDQANRHRDLGADVLCIDDFDIADLAPEDTLYPVATNLEHCAYLIHTSGTTAEPKAVQIAARSILHVAFYAPLEPVYDTDVVAHANNSSFDVSLFDIWVPLLRGAQIAVINKAVLLDPPMMAREIDRLGITVMATTTAVLNLAAFIYPKAFAKLRLVTIGGEAANVAAIRIILKNGPPAMLFNAYGPTECCVFCLAHQITPADVEHGSIGVSIGKPVGRTITYIAGDEGGESDQGELWIGGPGVSPGYFRQPEKNLAAFSDLGEAMTSLENPVRFYRTGDIVRRRPNGALEYVGRRDHQVKVRGFRIELEAVEAGLLKTGLFSDAVAMRIEMPQNGAGSILAAYVVPTDVSKPPTMDEALESAKSILPHYMVPQLELVPRLPLNRHLKVDRKQLAELFGRRWEDVSPAQPENASQDVRSALVSLWATVLASPLSTYGDDDDFLHLGGTSLQAAMLINQIRHKFDIEVSLLTLYDNTTLGALTSIIKQRLSGQSETLHNEKDSWVADSEIADDLSCPLDRPIDWCRDTEGRVFLTGGTGFVGAFLLADLLHMPQTSQVRCLVRATDAAVGQERLRAALDKYGLWEDGFADKLVAIAGLLEDDYLGMGREQFEEAASWASVVFHLGARVNYAQPYSLHRASNTLGTRNMVRFACAGRTKAIHYVSSIGCFGPTGSILGTTSVREDEPLLPHITALPYDHGYAQSQWVADALLRRLMDRGFPIAIYRPGFIVGHSQTGACNPDDFLSRLIDACREIGCYPQLPNQRKEFVPVDYVNAAILHIAASPASLGHAYHIVPPTRAVSIDMDNSMALVDRAGNSPMRPVSYKEWVERLAATSPKRLLPLQPMLAERVKDGLTRWELYENMPVYETTNTARALQNYPGGLQFPVLDTSLMKRYLDFLEAKG.

The interval 29–425 is adenylation (A) domain; it reads RAQKSHQAIA…GRRDHQVKVR (397 aa). Residues 534–611 form the Carrier domain; it reads NASQDVRSAL…ALTSIIKQRL (78 aa). At Ser571 the chain carries O-(pantetheine 4'-phosphoryl)serine. Residues 655 to 898 enclose the Thioester reductase (TE) domain; sequence LTGGTGFVGA…VPVDYVNAAI (244 aa).

It belongs to the NRP synthetase family. Pantetheine 4'-phosphate serves as cofactor.

The enzyme catalyses L-tyrosinal + AMP + diphosphate + NADP(+) = L-tyrosine + ATP + NADPH + H(+). It participates in secondary metabolite biosynthesis. In terms of biological role, non-canonical nonribosomal peptide synthetase; part of the gene cluster that mediates the biosynthesis of the alkaloid (-)-FR901483, a potent immunosuppressant that shows efficacy in animal models and a probable inhibitor of purine nucleotide biosynthesis by targeting phosphoribosylpyrophosphate amidotransferase (PPAT). Within the pathway, FrzA catalyzes the reduction of L-tyrosine via its C-terminal reductase domain to produce L-tyrosinal. The biosynthesis of (-)-FR901483 starts with the condensation of two L-tyrosines to yield (S,S)-dityrosyl-piperazine. This process occurs in 3 steps with the non-canonical nonribosomal peptide synthetase FrzA catalyzing the reduction of L-tyrosine into L-tyrosinal, the spontaneous condensation of 2 L-tyrosinal units, and the subsequent reduction by the NmrA-like family domain-containing oxidoreductase FrzB. The cytochrome P450 monooxygenase FrzC then performs coupling between N10 and C1' to morph the piperazine into a 1,4-diazabicyclo[3.2.1]octane spiro-fused to a 2,5-cyclohexadienone. The dienone portion is further reduced to cyclohexanone by the flavin-dependent reductase FrzD. The methyltranserases (MTs) FrzE and FrzF are then involved in the methylation at the C10' amine and the C4 phenolic oxygen, respectively. The order of the two MTs appear to be interchangeable. Cleavage of the C9-N10' bond by the dioxygenase FrzG then leads to formation of a conjugated iminium. In addition to the oxidation of C9, an additional dehydrogenation between C7 and C8 can occur to give a likely shunt product. The next biosynthetic step is the intramolecular aldol condensation catalyzed by the newly identified aldolase FrzH to yield an aza-tricyclic product with the formation of a C9-C3' bond. The short-chain dehydrogenase/reductase FrzI then produces dephospho-(-)-FR901483 that is phosphorylated at C4'-OH into (-)-FR901483 by the phosphotransferase FrzJ. This is Non-canonical nonribosomal peptide synthetase FrzA from Cladobotryum sp.